The sequence spans 171 residues: HTH-type transcriptional regulator AldR (171 aa).

Residues 1–14 (MSEGSSITGVQTPG) show a composition bias toward polar residues. Residues 1 to 21 (MSEGSSITGVQTPGSPKDVRA) form a disordered region. Positions 24–85 (LDDIDRRILL…DIDPAAVGLG (62 aa)) constitute an HTH asnC-type domain. A DNA-binding region (H-T-H motif) is located at residues 43–62 (NSALAEMVGIAPSTCHGRVR).

In terms of assembly, homodimer in the absence of L-alanine. Homooctamer in the presence of L-alanine. Homotetramers in the presence of L-cysteine.

With respect to regulation, in the presence of alanine, AldR changes its quaternary structure from a homodimer to an octamer with an open-ring conformation. The binding affinity of AldR for the ald control region is increased significantly by L-alanine. In vitro, L-cysteine also increases the binding affinity of AldR for the target DNA. Functionally, transcriptional regulator that might play a role under hypoxic conditions. Regulates the expression of ald, which encodes L-alanine dehydrogenase. Serves as both an activator for ald expression in the presence of L-alanine and a repressor in the absence of L-alanine. Acts by binding directly to the upstream region of the ald gene. Four AldR-binding sites (O2, O1, O4 and O3) were identified upstream of the ald gene. O2, O1 and O4 are required for the induction of ald expression by alanine, while O3 is directly involved in the repression of ald expression, by occluding the access of RNA polymerase to the ald promoter. In addition to O3, both O1 and O4 are also necessary for full repression of ald expression in the absence of alanine. This is HTH-type transcriptional regulator AldR from Mycolicibacterium smegmatis (strain ATCC 700084 / mc(2)155) (Mycobacterium smegmatis).